The following is a 371-amino-acid chain: Maltose/maltodextrin import ATP-binding protein MalK (371 aa).

An ABC transporter domain is found at 4-234 (VQLQNVTKAW…PADRFVAGFI (231 aa)). An ATP-binding site is contributed by 36-43 (GPSGCGKS).

The protein belongs to the ABC transporter superfamily. Maltooligosaccharide importer (TC 3.A.1.1.1) family. In terms of assembly, the complex is composed of two ATP-binding proteins (MalK), two transmembrane proteins (MalG and MalK) and a solute-binding protein (MalE).

Its subcellular location is the cell inner membrane. It carries out the reaction D-maltose(out) + ATP + H2O = D-maltose(in) + ADP + phosphate + H(+). In terms of biological role, part of the ABC transporter complex MalEFGK involved in maltose/maltodextrin import. Responsible for energy coupling to the transport system. The polypeptide is Maltose/maltodextrin import ATP-binding protein MalK (Shigella flexneri serotype 5b (strain 8401)).